Consider the following 449-residue polypeptide: Exopolygalacturonase X-2 (449 aa).

The first 24 residues, methionine 1 to alanine 24, serve as a signal peptide directing secretion. N-linked (GlcNAc...) asparagine glycans are attached at residues asparagine 136, asparagine 172, and asparagine 208. One copy of the PbH1 1 repeat lies at serine 240–proline 261. Catalysis depends on aspartate 254, which acts as the Proton donor. Cysteine 256 and cysteine 273 are joined by a disulfide. N-linked (GlcNAc...) asparagine glycosylation is found at asparagine 262 and asparagine 274. PbH1 repeat units lie at residues serine 263–serine 283 and valine 294–valine 315. Histidine 277 is an active-site residue. 4 N-linked (GlcNAc...) asparagine glycosylation sites follow: asparagine 301, asparagine 306, asparagine 340, and asparagine 365. A disulfide bridge links cysteine 403 with cysteine 409. N-linked (GlcNAc...) asparagine glycans are attached at residues asparagine 416 and asparagine 421.

This sequence belongs to the glycosyl hydrolase 28 family.

The protein resides in the secreted. The catalysed reaction is [(1-&gt;4)-alpha-D-galacturonosyl](n) + H2O = alpha-D-galacturonate + [(1-&gt;4)-alpha-D-galacturonosyl](n-1). Functionally, specific in hydrolyzing the terminal glycosidic bond of polygalacturonic acid and oligogalacturonates. The protein is Exopolygalacturonase X-2 (pgaX-2) of Emericella nidulans (strain FGSC A4 / ATCC 38163 / CBS 112.46 / NRRL 194 / M139) (Aspergillus nidulans).